Reading from the N-terminus, the 36-residue chain is Pancreatic polypeptide (36 aa).

Tyr-36 is subject to Tyrosine amide.

This sequence belongs to the NPY family.

The protein resides in the secreted. Its function is as follows. Hormone secreted by pancreatic cells that acts as a regulator of pancreatic and gastrointestinal functions probably by signaling through the G protein-coupled receptor NPY4R2. This chain is Pancreatic polypeptide (PPY), found in Chinchilla chinchilla (Short-tailed chinchilla).